Consider the following 293-residue polypeptide: Signal recognition particle receptor FtsY (293 aa).

GTP-binding positions include 93-100, 175-179, and 239-242; these read GVNGAGKT, DTAGR, and TKLD.

Belongs to the GTP-binding SRP family. FtsY subfamily. As to quaternary structure, part of the signal recognition particle protein translocation system, which is composed of SRP and FtsY. SRP is a ribonucleoprotein composed of Ffh and a 4.5S RNA molecule.

It localises to the cell inner membrane. The protein resides in the cytoplasm. It catalyses the reaction GTP + H2O = GDP + phosphate + H(+). Its function is as follows. Involved in targeting and insertion of nascent membrane proteins into the cytoplasmic membrane. Acts as a receptor for the complex formed by the signal recognition particle (SRP) and the ribosome-nascent chain (RNC). Interaction with SRP-RNC leads to the transfer of the RNC complex to the Sec translocase for insertion into the membrane, the hydrolysis of GTP by both Ffh and FtsY, and the dissociation of the SRP-FtsY complex into the individual components. The polypeptide is Signal recognition particle receptor FtsY (Helicobacter pylori (strain J99 / ATCC 700824) (Campylobacter pylori J99)).